Reading from the N-terminus, the 470-residue chain is Cell division protein FtsP (470 aa).

Positions 1 to 29 form a signal peptide, tat-type signal; the sequence is MKNCSRRQLLKTTLFSTALFSVPAPLLAA.

Belongs to the FtsP family. Predicted to be exported by the Tat system. The position of the signal peptide cleavage has not been experimentally proven.

The protein resides in the periplasm. In terms of biological role, cell division protein that is required for growth during stress conditions. May be involved in protecting or stabilizing the divisomal assembly under conditions of stress. This is Cell division protein FtsP from Aggregatibacter aphrophilus (strain NJ8700) (Haemophilus aphrophilus).